The chain runs to 229 residues: NAD-dependent protein deacetylase (229 aa).

Residues 1-229 form the Deacetylase sirtuin-type domain; that stretch reads MNKLNEALKK…SDAVKVFAEI (229 aa). Ala20, Arg32, Gln96, Ile98, Asp99, His114, Thr181, Ser182, Asn205, and Val223 together coordinate NAD(+). Residues Ile98 and Asp99 each contribute to the nicotinamide site. His114 acts as the Proton acceptor in catalysis.

This sequence belongs to the sirtuin family. Class U subfamily.

The protein resides in the cytoplasm. It catalyses the reaction N(6)-acetyl-L-lysyl-[protein] + NAD(+) + H2O = 2''-O-acetyl-ADP-D-ribose + nicotinamide + L-lysyl-[protein]. In terms of biological role, NAD-dependent protein deacetylase which modulates the activities of several enzymes which are inactive in their acetylated form. The protein is NAD-dependent protein deacetylase of Listeria monocytogenes serotype 4b (strain F2365).